Reading from the N-terminus, the 492-residue chain is JmjC domain-containing histone demethylation protein 1 (492 aa).

The PHD-type; atypical zinc finger occupies proline 4–glycine 72. Residues threonine 254–lysine 409 form the JmjC domain. Threonine 302 is a binding site for substrate. Residues histidine 305 and aspartate 307 each contribute to the Fe cation site. Lysine 322 provides a ligand contact to substrate. Histidine 377 provides a ligand contact to Fe cation.

Belongs to the JHDM1 histone demethylase family. Requires Fe(2+) as cofactor.

The protein resides in the nucleus. The catalysed reaction is N(6),N(6)-dimethyl-L-lysyl(36)-[histone H3] + 2 2-oxoglutarate + 2 O2 = L-lysyl(36)-[histone H3] + 2 formaldehyde + 2 succinate + 2 CO2. Histone demethylase that specifically demethylates 'Lys-36' of histone H3, thereby playing a central role in histone code. Does not demethylate H3 'Lys-4' nor 'Lys-79'. In Saccharomyces cerevisiae (strain ATCC 204508 / S288c) (Baker's yeast), this protein is JmjC domain-containing histone demethylation protein 1 (JHD1).